Consider the following 170-residue polypeptide: Peptide deformylase 1 (170 aa).

Cys-91 and His-133 together coordinate Fe cation. Residue Glu-134 is part of the active site. His-137 provides a ligand contact to Fe cation.

The protein belongs to the polypeptide deformylase family. The cofactor is Fe(2+).

The catalysed reaction is N-terminal N-formyl-L-methionyl-[peptide] + H2O = N-terminal L-methionyl-[peptide] + formate. In terms of biological role, removes the formyl group from the N-terminal Met of newly synthesized proteins. Requires at least a dipeptide for an efficient rate of reaction. N-terminal L-methionine is a prerequisite for activity but the enzyme has broad specificity at other positions. This Vibrio vulnificus (strain CMCP6) protein is Peptide deformylase 1.